A 764-amino-acid chain; its full sequence is Nucleolar complex-associated protein 2 (764 aa).

Residues 3–69 (AKDDKKRVKK…EEELKRLQEK (67 aa)) adopt a coiled-coil conformation. Disordered regions lie at residues 23 to 67 (ELNN…KRLQ), 89 to 113 (ATEIEDDADVEPDTDLEDTEKEGDD), 627 to 646 (AVFGKNAPSSDDEDDEDRME), and 651 to 726 (AFNS…EDDA). The span at 30-41 (IDAHDIVMEQKS) shows a compositional bias: basic and acidic residues. Positions 42 to 51 (DKKRGKKVKS) are enriched in basic residues. The span at 52 to 67 (KKAEAEEHEEELKRLQ) shows a compositional bias: basic and acidic residues. The segment covering 90 to 113 (TEIEDDADVEPDTDLEDTEKEGDD) has biased composition (acidic residues). Residues 661-672 (DSKEKEPEEEKT) show a composition bias toward basic and acidic residues. A Nuclear localization signal 1 motif is present at residues 673–680 (KKKKRKRG). Positions 673–682 (KKKKRKRGGK) are enriched in basic residues. Over residues 693 to 726 (GLGEDDVVEDFVLSSDEEEEDLFDIGGDKDEDDA) the composition is skewed to acidic residues. The short motif at 738–745 (SKKTKGTY) is the Nuclear localization signal 2 element.

Belongs to the NOC2 family. Component of nucleolar complexes. Forms homodimers. Interacts with RBL and NOC3 in both the nucleolus and nucleoplasm. Binds to SWA2.

The protein localises to the nucleus. The protein resides in the nucleolus. It is found in the nucleoplasm. Its function is as follows. Together with SWA2, probably involved in pre-ribosome export from the nucleus to the cytoplasm. The sequence is that of Nucleolar complex-associated protein 2 from Arabidopsis thaliana (Mouse-ear cress).